A 63-amino-acid chain; its full sequence is Large ribosomal subunit protein bL28 (63 aa).

Belongs to the bacterial ribosomal protein bL28 family.

This Clostridium botulinum (strain Alaska E43 / Type E3) protein is Large ribosomal subunit protein bL28.